We begin with the raw amino-acid sequence, 348 residues long: Nicotinate-nucleotide pyrophosphorylase [carboxylating], chloroplastic (348 aa).

The N-terminal 41 residues, 1–41, are a transit peptide targeting the chloroplast; the sequence is MISVSRFLSPQFYAIPRSFVKMSASATQTAGEVSMGIKPPS. Substrate-binding positions include R139, 170–172, R194, K204, E237, D264, 296–298, and 317–319; these read TRK, SGN, and SGA.

The protein belongs to the NadC/ModD family.

It is found in the plastid. The protein resides in the chloroplast. The catalysed reaction is nicotinate beta-D-ribonucleotide + CO2 + diphosphate = quinolinate + 5-phospho-alpha-D-ribose 1-diphosphate + 2 H(+). Its pathway is cofactor biosynthesis; NAD(+) biosynthesis; nicotinate D-ribonucleotide from quinolinate: step 1/1. In terms of biological role, involved in the biosynthesis of NAD(+). Catalyzes the conversion of quinolate to nicotinate to nicotinate beta-D-ribonucleotide. This Arabidopsis thaliana (Mouse-ear cress) protein is Nicotinate-nucleotide pyrophosphorylase [carboxylating], chloroplastic.